The chain runs to 307 residues: Ribonuclease HII (307 aa).

The 192-residue stretch at Glu44–Leu235 folds into the RNase H type-2 domain. Positions 50, 51, and 144 each coordinate a divalent metal cation. A disordered region spans residues Ala241–Pro307. Low complexity predominate over residues Ala250–Gly280. Positions Arg287 to Asp296 are enriched in basic and acidic residues.

This sequence belongs to the RNase HII family. It depends on Mn(2+) as a cofactor. Requires Mg(2+) as cofactor.

It is found in the cytoplasm. It catalyses the reaction Endonucleolytic cleavage to 5'-phosphomonoester.. Endonuclease that specifically degrades the RNA of RNA-DNA hybrids. This is Ribonuclease HII from Acidothermus cellulolyticus (strain ATCC 43068 / DSM 8971 / 11B).